A 354-amino-acid polypeptide reads, in one-letter code: Ribosomal RNA large subunit methyltransferase M (354 aa).

S-adenosyl-L-methionine is bound by residues Ser-183, 216-219, Asp-235, Asp-255, and Asp-271; that span reads SPGG. Lys-300 functions as the Proton acceptor in the catalytic mechanism.

The protein belongs to the class I-like SAM-binding methyltransferase superfamily. RNA methyltransferase RlmE family. RlmM subfamily. Monomer.

Its subcellular location is the cytoplasm. The catalysed reaction is cytidine(2498) in 23S rRNA + S-adenosyl-L-methionine = 2'-O-methylcytidine(2498) in 23S rRNA + S-adenosyl-L-homocysteine + H(+). In terms of biological role, catalyzes the 2'-O-methylation at nucleotide C2498 in 23S rRNA. This Pseudomonas putida (strain ATCC 700007 / DSM 6899 / JCM 31910 / BCRC 17059 / LMG 24140 / F1) protein is Ribosomal RNA large subunit methyltransferase M.